We begin with the raw amino-acid sequence, 348 residues long: MGPRARPALFFLILLRTVAAQGRPPRSHSLRYLFMGASERDHGLPLFEALGYVDDELFVAYNHESRRAESRAQWVLGEAHSQLWLQLSQSLKGWDHMFIVDFWTIMDNHNHSKESHTLQVILGCEVQEDNSTRGFWKYGYDGQDHLEFCPETLDWRAAESRALTTKLEWEVNKIRAKQNRAYLERDCPEQLQWLLELGRGVLDQQVPPLVKVTHHVASAVTTLRCQALNFYPQNITMRWLKDRKPMDVKDAESKDVLPSGDGTYQSWEALAVPPGEEQRYTCQVEHPGLDQPLTATWEPSLSNTLVTGVISGIAVCVIIFFIGILFRILRKRQASRGAMGDYVLGECE.

Positions 1 to 22 are cleaved as a signal peptide; it reads MGPRARPALFFLILLRTVAAQG. Residues 23–114 are alpha-1; sequence RPPRSHSLRY…IMDNHNHSKE (92 aa). Residues 23-306 are Extracellular-facing; the sequence is RPPRSHSLRY…WEPSLSNTLV (284 aa). N-linked (GlcNAc...) asparagine glycans are attached at residues asparagine 110, asparagine 130, and asparagine 234. The segment at 115–205 is alpha-2; it reads SHTLQVILGC…ELGRGVLDQQ (91 aa). Cystine bridges form between cysteine 124/cysteine 187 and cysteine 225/cysteine 282. The alpha-3 stretch occupies residues 206 to 297; it reads VPPLVKVTHH…GLDQPLTATW (92 aa). The Ig-like C1-type domain occupies 207–296; that stretch reads PPLVKVTHHV…PGLDQPLTAT (90 aa). Residues 298–306 are connecting peptide; it reads EPSLSNTLV. A helical membrane pass occupies residues 307–330; the sequence is TGVISGIAVCVIIFFIGILFRILR. Over 331–348 the chain is Cytoplasmic; that stretch reads KRQASRGAMGDYVLGECE.

It belongs to the MHC class I family. In terms of assembly, binds TFR through the extracellular domain in a pH-dependent manner.

Its subcellular location is the cell membrane. Binds to transferrin receptor (TFR) and reduces its affinity for iron-loaded transferrin. The chain is Hereditary hemochromatosis protein homolog (HFE) from Ceratotherium simum (White rhinoceros).